The sequence spans 458 residues: Dihydrolipoyl dehydrogenase (458 aa).

FAD is bound by residues 30–38, K47, and A112; that span reads DKGKLGGTC. A disulfide bridge connects residues C38 and C43. NAD(+) is bound by residues 177-181, E200, and 263-266; these read GGGVI and AIGR. FAD contacts are provided by D305 and A313. H437 serves as the catalytic Proton acceptor.

Belongs to the class-I pyridine nucleotide-disulfide oxidoreductase family. In terms of assembly, homodimer. The cofactor is FAD.

Its subcellular location is the cytoplasm. The enzyme catalyses N(6)-[(R)-dihydrolipoyl]-L-lysyl-[protein] + NAD(+) = N(6)-[(R)-lipoyl]-L-lysyl-[protein] + NADH + H(+). Its pathway is ketone degradation; acetoin degradation. The protein is Dihydrolipoyl dehydrogenase (acoL) of Bacillus subtilis (strain 168).